Here is a 279-residue protein sequence, read N- to C-terminus: MAIRKLAPVTPGSRFMSYPVFDEITKSKPEKSLLEPLTKSGGRNSAGRKTSRHRGGGHKRHYRIIDFKRNKDGIVATVAAIEYDPNRSARIALLHYIDGEKRYILAPKGLKVGDKVESGEKVEIKTGNTMPMKNIPLGTDIHNIEMKAGKGGQIVRSAGAFAVLAAREGDYVTLKLPSGEIRKVRVECRATIGVIGNADHENIDLGKAGRSRWLGIRPQTRGMAMNPVDHPMGGGEGKSKSGGGRKHPKSPWGQLAKGLKTRNRKKASQKLIVRGRNAK.

2 disordered regions span residues 31–61 (KSLLEPLTKSGGRNSAGRKTSRHRGGGHKRH) and 222–279 (GMAM…RNAK). Basic residues predominate over residues 49–61 (KTSRHRGGGHKRH). The span at 232–242 (MGGGEGKSKSG) shows a compositional bias: gly residues. Basic residues predominate over residues 259 to 268 (LKTRNRKKAS).

This sequence belongs to the universal ribosomal protein uL2 family. In terms of assembly, part of the 50S ribosomal subunit. Forms a bridge to the 30S subunit in the 70S ribosome.

Its function is as follows. One of the primary rRNA binding proteins. Required for association of the 30S and 50S subunits to form the 70S ribosome, for tRNA binding and peptide bond formation. It has been suggested to have peptidyltransferase activity; this is somewhat controversial. Makes several contacts with the 16S rRNA in the 70S ribosome. This chain is Large ribosomal subunit protein uL2, found in Chlorobium chlorochromatii (strain CaD3).